The following is a 304-amino-acid chain: Non-specific ribonucleoside hydrolase RihC (304 aa).

Histidine 233 is a catalytic residue.

Belongs to the IUNH family. RihC subfamily.

Its function is as follows. Hydrolyzes both purine and pyrimidine ribonucleosides with a broad-substrate specificity. The polypeptide is Non-specific ribonucleoside hydrolase RihC (Klebsiella pneumoniae subsp. pneumoniae (strain ATCC 700721 / MGH 78578)).